The sequence spans 877 residues: Alanine--tRNA ligase (877 aa).

Zn(2+) is bound by residues histidine 562, histidine 566, cysteine 664, and histidine 668.

It belongs to the class-II aminoacyl-tRNA synthetase family. Zn(2+) is required as a cofactor.

It localises to the cytoplasm. It carries out the reaction tRNA(Ala) + L-alanine + ATP = L-alanyl-tRNA(Ala) + AMP + diphosphate. Its function is as follows. Catalyzes the attachment of alanine to tRNA(Ala) in a two-step reaction: alanine is first activated by ATP to form Ala-AMP and then transferred to the acceptor end of tRNA(Ala). Also edits incorrectly charged Ser-tRNA(Ala) and Gly-tRNA(Ala) via its editing domain. The protein is Alanine--tRNA ligase of Synechocystis sp. (strain ATCC 27184 / PCC 6803 / Kazusa).